A 229-amino-acid polypeptide reads, in one-letter code: Triosephosphate isomerase (229 aa).

6–8 is a substrate binding site; it reads NFK. H88 (electrophile) is an active-site residue. Residue E157 is the Proton acceptor of the active site. Substrate contacts are provided by G163 and S193.

Belongs to the triosephosphate isomerase family. In terms of assembly, homodimer.

It localises to the cytoplasm. It carries out the reaction D-glyceraldehyde 3-phosphate = dihydroxyacetone phosphate. Its pathway is carbohydrate biosynthesis; gluconeogenesis. It functions in the pathway carbohydrate degradation; glycolysis; D-glyceraldehyde 3-phosphate from glycerone phosphate: step 1/1. Its function is as follows. Involved in the gluconeogenesis. Catalyzes stereospecifically the conversion of dihydroxyacetone phosphate (DHAP) to D-glyceraldehyde-3-phosphate (G3P). The sequence is that of Triosephosphate isomerase from Sulfurovum sp. (strain NBC37-1).